The sequence spans 124 residues: Fluoride-specific ion channel FluC 2 (124 aa).

The next 4 helical transmembrane spans lie at 9–29, 34–54, 67–87, and 99–119; these read LGIF…STWL, DFPW…IFLV, LILA…SLML, and FSLV…AYFL. Na(+) is bound by residues glycine 77 and threonine 80.

It belongs to the fluoride channel Fluc/FEX (TC 1.A.43) family.

Its subcellular location is the cell membrane. It catalyses the reaction fluoride(in) = fluoride(out). With respect to regulation, na(+) is not transported, but it plays an essential structural role and its presence is essential for fluoride channel function. Its function is as follows. Fluoride-specific ion channel. Important for reducing fluoride concentration in the cell, thus reducing its toxicity. The chain is Fluoride-specific ion channel FluC 2 from Streptococcus pneumoniae (strain ATCC BAA-255 / R6).